Consider the following 40-residue polypeptide: Biotin carboxylase (40 aa).

Residues 1 to 40 (ILVANRGEIAVRLLEEAPSPALTPELRITAYLPSGGPFVR) form the Biotin carboxylation domain. An ATP-grasp domain is found at 13–27 (LLEEAPSPALTPELR).

Acetyl-CoA carboxylase is a heterohexamer of biotin carboxyl carrier protein, biotin carboxylase and the two subunits of carboxyl transferase in a 2:2 complex. Mg(2+) is required as a cofactor. It depends on Mn(2+) as a cofactor.

It catalyses the reaction N(6)-biotinyl-L-lysyl-[protein] + hydrogencarbonate + ATP = N(6)-carboxybiotinyl-L-lysyl-[protein] + ADP + phosphate + H(+). The protein operates within lipid metabolism; malonyl-CoA biosynthesis; malonyl-CoA from acetyl-CoA: step 1/1. Its function is as follows. This protein is a component of the acetyl coenzyme A carboxylase complex; first, biotin carboxylase catalyzes the carboxylation of the carrier protein and then the transcarboxylase transfers the carboxyl group to form malonyl-CoA. In Populus euphratica (Euphrates poplar), this protein is Biotin carboxylase.